The chain runs to 338 residues: Lipoate-protein ligase A (338 aa).

The region spanning 29-216 (SPDQRVLFLW…AFFNYYDEKV (188 aa)) is the BPL/LPL catalytic domain. Residues Arg-71, 76 to 79 (GAVF), and Lys-134 contribute to the ATP site. Lys-134 contributes to the (R)-lipoate binding site.

This sequence belongs to the LplA family. As to quaternary structure, monomer.

The protein localises to the cytoplasm. It catalyses the reaction L-lysyl-[lipoyl-carrier protein] + (R)-lipoate + ATP = N(6)-[(R)-lipoyl]-L-lysyl-[lipoyl-carrier protein] + AMP + diphosphate + H(+). It participates in protein modification; protein lipoylation via exogenous pathway; protein N(6)-(lipoyl)lysine from lipoate: step 1/2. The protein operates within protein modification; protein lipoylation via exogenous pathway; protein N(6)-(lipoyl)lysine from lipoate: step 2/2. Catalyzes both the ATP-dependent activation of exogenously supplied lipoate to lipoyl-AMP and the transfer of the activated lipoyl onto the lipoyl domains of lipoate-dependent enzymes. This is Lipoate-protein ligase A from Yersinia enterocolitica serotype O:8 / biotype 1B (strain NCTC 13174 / 8081).